The following is an 80-amino-acid chain: MSCCGGNCGCGAGCKCVGCGGCKMYPDLSFSGETTTTETLVLGLAPAMNSQFEASGETFVAENDACKCGSDCKCNPCTCK.

Belongs to the metallothionein superfamily. Type 15 family.

In terms of biological role, metallothioneins have a high content of cysteine residues that bind various heavy metals. The protein is Metallothionein-like protein type 2, MT2-28 of Brassica juncea (Indian mustard).